The sequence spans 143 residues: Transmembrane protein 80 (143 aa).

4 helical membrane-spanning segments follow: residues 21-41 (MLFY…LLMI), 55-75 (LVLD…RLYL), 99-119 (ALLS…DWAL), and 121-141 (ATLL…IAAF).

It localises to the membrane. The protein localises to the cell projection. It is found in the cilium. The chain is Transmembrane protein 80 from Homo sapiens (Human).